A 509-amino-acid chain; its full sequence is ATP synthase subunit alpha (509 aa).

169 to 176 (GDRQTGKT) serves as a coordination point for ATP.

It belongs to the ATPase alpha/beta chains family. F-type ATPases have 2 components, CF(1) - the catalytic core - and CF(0) - the membrane proton channel. CF(1) has five subunits: alpha(3), beta(3), gamma(1), delta(1), epsilon(1). CF(0) has three main subunits: a(1), b(2) and c(9-12). The alpha and beta chains form an alternating ring which encloses part of the gamma chain. CF(1) is attached to CF(0) by a central stalk formed by the gamma and epsilon chains, while a peripheral stalk is formed by the delta and b chains.

Its subcellular location is the cell inner membrane. The enzyme catalyses ATP + H2O + 4 H(+)(in) = ADP + phosphate + 5 H(+)(out). Functionally, produces ATP from ADP in the presence of a proton gradient across the membrane. The alpha chain is a regulatory subunit. This chain is ATP synthase subunit alpha, found in Xanthobacter autotrophicus (strain ATCC BAA-1158 / Py2).